The following is a 427-amino-acid chain: MDALTTFDHIIINANLATFSAQYGFDTYADNKDSISAAAKSTPYGQLENAAIGIKDSKIAWIGAHTQITPYLTHYQSQQITDADGHWITPGLIDCHTHIVYGGNRSNEFEARLHGANYQDIAAQGGGIVSTVRSTREANIEELFAQSEKRLLALVKEGVTSIEIKSGYGLDLKTERKMLKVARALGDKHNIHVSTTYLAAHALPPEYKDRVDDYIEQVCQWLPILHSEGLVDAVDGFCENIAFTTEQIKRVFEVARSLNLPVKLHSEQLSNIGASALVAEYQGLSSDHLEHLVEDDIKKMATSNTVAVLLPGAFYTLRDTKLPPIEELRKHQVPMAISTDCNPGTSPLTSLLLAMNMGCTLFYMTPEEVLAGATVHAAQALGLAHKGRIEVGCDADLALWDITRPADLAYQMGLNPIEGIMIKGAWR.

Fe(3+)-binding residues include H96 and H98. H96 and H98 together coordinate Zn(2+). Residues R105, Y168, and H201 each coordinate 4-imidazolone-5-propanoate. Residue Y168 participates in N-formimidoyl-L-glutamate binding. H265 is a binding site for Fe(3+). Residue H265 coordinates Zn(2+). Q268 is a binding site for 4-imidazolone-5-propanoate. D340 provides a ligand contact to Fe(3+). D340 is a binding site for Zn(2+). N-formimidoyl-L-glutamate is bound by residues N342 and G344. Position 345 (T345) interacts with 4-imidazolone-5-propanoate.

This sequence belongs to the metallo-dependent hydrolases superfamily. HutI family. Zn(2+) serves as cofactor. The cofactor is Fe(3+).

It localises to the cytoplasm. The enzyme catalyses 4-imidazolone-5-propanoate + H2O = N-formimidoyl-L-glutamate. Its pathway is amino-acid degradation; L-histidine degradation into L-glutamate; N-formimidoyl-L-glutamate from L-histidine: step 3/3. Functionally, catalyzes the hydrolytic cleavage of the carbon-nitrogen bond in imidazolone-5-propanoate to yield N-formimidoyl-L-glutamate. It is the third step in the universal histidine degradation pathway. The polypeptide is Imidazolonepropionase (Psychrobacter cryohalolentis (strain ATCC BAA-1226 / DSM 17306 / VKM B-2378 / K5)).